A 271-amino-acid chain; its full sequence is Cobalt import ATP-binding protein CbiO (271 aa).

The ABC transporter domain occupies 2–236; the sequence is LATSDLWFRY…TEAMEHAGLT (235 aa). ATP is bound at residue 34 to 41; that stretch reads GANGCGKS.

The protein belongs to the ABC transporter superfamily. Cobalt importer (TC 3.A.1.18.1) family. As to quaternary structure, forms an energy-coupling factor (ECF) transporter complex composed of an ATP-binding protein (A component, CbiO), a transmembrane protein (T component, CbiQ) and 2 possible substrate-capture proteins (S components, CbiM and CbiN) of unknown stoichimetry. Expression of just CbiMN in E.coli confers some cobalt uptake.

The protein resides in the cell inner membrane. Its pathway is cofactor biosynthesis; adenosylcobalamin biosynthesis. In terms of biological role, part of the energy-coupling factor (ECF) transporter complex CbiMNOQ involved in cobalt import. The complex confers cobalt uptake upon expression in E.coli; can also transport nickel with a very low affinity. Presumably responsible for energy coupling to the transport system. This Salmonella typhimurium (strain LT2 / SGSC1412 / ATCC 700720) protein is Cobalt import ATP-binding protein CbiO.